A 179-amino-acid chain; its full sequence is Large ribosomal subunit protein uL5 (179 aa).

It belongs to the universal ribosomal protein uL5 family. As to quaternary structure, part of the 50S ribosomal subunit; part of the 5S rRNA/L5/L18/L25 subcomplex. Contacts the 5S rRNA and the P site tRNA. Forms a bridge to the 30S subunit in the 70S ribosome.

Functionally, this is one of the proteins that bind and probably mediate the attachment of the 5S RNA into the large ribosomal subunit, where it forms part of the central protuberance. In the 70S ribosome it contacts protein S13 of the 30S subunit (bridge B1b), connecting the 2 subunits; this bridge is implicated in subunit movement. Contacts the P site tRNA; the 5S rRNA and some of its associated proteins might help stabilize positioning of ribosome-bound tRNAs. This Natranaerobius thermophilus (strain ATCC BAA-1301 / DSM 18059 / JW/NM-WN-LF) protein is Large ribosomal subunit protein uL5.